The chain runs to 89 residues: Small ribosomal subunit protein uS15 (89 aa).

It belongs to the universal ribosomal protein uS15 family. As to quaternary structure, part of the 30S ribosomal subunit. Forms a bridge to the 50S subunit in the 70S ribosome, contacting the 23S rRNA.

In terms of biological role, one of the primary rRNA binding proteins, it binds directly to 16S rRNA where it helps nucleate assembly of the platform of the 30S subunit by binding and bridging several RNA helices of the 16S rRNA. Its function is as follows. Forms an intersubunit bridge (bridge B4) with the 23S rRNA of the 50S subunit in the ribosome. This chain is Small ribosomal subunit protein uS15, found in Thermobifida fusca (strain YX).